Consider the following 201-residue polypeptide: Orotate phosphoribosyltransferase (201 aa).

113-121 (EDIITTGKS) contributes to the 5-phospho-alpha-D-ribose 1-diphosphate binding site. 2 residues coordinate orotate: Thr117 and Arg145.

It belongs to the purine/pyrimidine phosphoribosyltransferase family. PyrE subfamily. In terms of assembly, homodimer. Mg(2+) is required as a cofactor.

The enzyme catalyses orotidine 5'-phosphate + diphosphate = orotate + 5-phospho-alpha-D-ribose 1-diphosphate. Its pathway is pyrimidine metabolism; UMP biosynthesis via de novo pathway; UMP from orotate: step 1/2. Functionally, catalyzes the transfer of a ribosyl phosphate group from 5-phosphoribose 1-diphosphate to orotate, leading to the formation of orotidine monophosphate (OMP). In Helicobacter pylori (strain HPAG1), this protein is Orotate phosphoribosyltransferase.